The chain runs to 28 residues: Toxin a (28 aa).

Residues 3 to 28 (VPGNYPLDSYGNCYPCTILGDNQYCI) enclose the LCN-type CS-alpha/beta domain.

The protein belongs to the long (3 C-C) scorpion toxin superfamily. Expressed by the venom gland.

It is found in the secreted. Binds to sodium channels (Nav) and affects the channel activation process. The chain is Toxin a from Androctonus crassicauda (Arabian fat-tailed scorpion).